We begin with the raw amino-acid sequence, 390 residues long: Probable protein phosphatase 2C 30 (390 aa).

A compositionally biased stretch (polar residues) spans 1-10 (MQLSKNPIKQ). Disordered regions lie at residues 1-20 (MQLS…NYTD) and 40-85 (PPLV…DSET). The span at 44–61 (FSPTSVKTPLSSPRSSPP) shows a compositional bias: low complexity. One can recognise a PPM-type phosphatase domain in the interval 128–385 (YYSVYCKRGR…DDISLIIIQL (258 aa)). Mn(2+) is bound by residues Asp166, Gly167, Asp331, and Asp376.

This sequence belongs to the PP2C family. It depends on Mg(2+) as a cofactor. Mn(2+) is required as a cofactor.

It catalyses the reaction O-phospho-L-seryl-[protein] + H2O = L-seryl-[protein] + phosphate. The enzyme catalyses O-phospho-L-threonyl-[protein] + H2O = L-threonyl-[protein] + phosphate. The sequence is that of Probable protein phosphatase 2C 30 (PP2C5) from Arabidopsis thaliana (Mouse-ear cress).